A 369-amino-acid polypeptide reads, in one-letter code: Protein VP6 (369 aa).

Disordered regions lie at residues 17–169 (KREL…LQGR) and 184–208 (LDRIGGCSGNSKTEGEEAKAGGGDR). Residues 29-68 (LREKGSTEAKSKLKEDGEKKNKSEKEENKIHDDRRVESQK) show a composition bias toward basic and acidic residues. Residues 92 to 111 (TGGGDGSAGARTGIGGGGVG) show a composition bias toward gly residues. 2 stretches are compositionally biased toward basic and acidic residues: residues 137–148 (TGADRVANDDAT) and 196–208 (TEGEEAKAGGGDR).

This sequence belongs to the orbivirus VP6 family.

It localises to the virion. This African horse sickness virus (AHSV) protein is Protein VP6 (Segment-9).